The sequence spans 320 residues: Homeobox-leucine zipper protein HOX25 (320 aa).

The segment at residues 79-139 is a DNA-binding region (homeobox); that stretch reads AAARKRRLTA…NRRARWKTKQ (61 aa). Residues 138–182 are leucine-zipper; that stretch reads KQLELDFDRLRAAHDELLAGRTALAADNESLRSQVILLTEKLQAN. 2 disordered regions span residues 181 to 209 and 249 to 282; these read ANGKSPSPSPAPAEQTAVPAAPESAKSFQ and DSPESYFAGARSPPSSSEDDCGGAGSDDDYPSSS. A compositionally biased stretch (acidic residues) spans 265 to 278; the sequence is SEDDCGGAGSDDDY.

This sequence belongs to the HD-ZIP homeobox family. Class I subfamily. In terms of tissue distribution, expressed in roots, leaf sheaths and blades and panicles.

It is found in the nucleus. Functionally, probable transcription factor. The sequence is that of Homeobox-leucine zipper protein HOX25 (HOX25) from Oryza sativa subsp. japonica (Rice).